A 229-amino-acid polypeptide reads, in one-letter code: Matrix protein (229 aa).

Over residues 1–10 (MSSLKKILGL) the composition is skewed to low complexity. The segment at 1 to 23 (MSSLKKILGLKGKGKKSKKLGIA) is disordered. The short motif at 2 to 4 (SSL) is the dynamin binding element. Residues 24-27 (PPPY) carry the PPXY motif motif. Residues 37-40 (PSAP) carry the PTAP/PSAP motif motif.

The protein belongs to the vesiculoviruses matrix protein family. As to quaternary structure, homomultimer. Interacts with viral nucleocapsid; this interaction contributes to the virion assembly. Interacts with the viral envelope glycoprotein; this interaction contributes to the virion assembly. Interacts with host RAE1-NUP98 complex. Interacts with host NEDD4 and TSG101. Interacts with host dynamin. Interacts with host NDUFAF4; the interaction inhibits viral propagation and is independent of interferon activation. Interacts with host GTF2H5; the interaction may inhibit host transcription. In terms of processing, phosphorylated by host.

It localises to the virion. The protein resides in the host endomembrane system. The protein localises to the host nucleus membrane. Its subcellular location is the host nucleus. It is found in the host cytoplasm. In terms of biological role, forms a double layer around the helical nucleocapsid, the inner matrix layer binding to the N helix and the outer matrix layer binding to the envelope glycoprotein. Plays a major role in assembly and budding of virion, by recruiting cellular partners of the ESCRT complexes that play a key role in releasing the budding particle from the host membrane. Condensates the ribonucleocapsid core during virus assembly. Inhibits the host mRNA nuclear export thereby inducing the shut off of cellular transcription and preventing the interferon signaling and the establishment of antiviral state in infected cells. This shutoff presumably inhibits interferon signaling and thus establishment of antiviral state in virus infected cells. Induces cell-rounding, cytoskeleton disorganization and apoptosis in infected cell. Inhibits host transcription, possibly through interaction with host DNA repair factor IIH/TFIIH GTF2H5 subunit. The chain is Matrix protein (M) from Vesicular stomatitis Indiana virus (strain 98COE North America) (VSIV).